A 117-amino-acid polypeptide reads, in one-letter code: Large ribosomal subunit protein bL20c (117 aa).

This sequence belongs to the bacterial ribosomal protein bL20 family.

Its subcellular location is the plastid. It is found in the chloroplast. In terms of biological role, binds directly to 23S ribosomal RNA and is necessary for the in vitro assembly process of the 50S ribosomal subunit. It is not involved in the protein synthesizing functions of that subunit. The protein is Large ribosomal subunit protein bL20c of Buxus microphylla (Littleleaf boxwood).